A 267-amino-acid chain; its full sequence is 2-keto-3-deoxy-L-rhamnonate aldolase (267 aa).

Residue H49 is the Proton acceptor of the active site. Q151 is a binding site for substrate. E153 contributes to the Mg(2+) binding site. Substrate contacts are provided by A178 and D179. Residue D179 coordinates Mg(2+).

Belongs to the HpcH/HpaI aldolase family. KDR aldolase subfamily. In terms of assembly, homohexamer. It depends on Mg(2+) as a cofactor.

It catalyses the reaction 2-dehydro-3-deoxy-L-rhamnonate = (S)-lactaldehyde + pyruvate. Its function is as follows. Catalyzes the reversible retro-aldol cleavage of 2-keto-3-deoxy-L-rhamnonate (KDR) to pyruvate and lactaldehyde. The protein is 2-keto-3-deoxy-L-rhamnonate aldolase of Escherichia coli O6:K15:H31 (strain 536 / UPEC).